The sequence spans 287 residues: Survival motor neuron protein (287 aa).

A disordered region spans residues 1–28 (MGGGGGGFPEPEDSVLFRRGTGESDDSD). The P1 (binding site for GEMIN2) stretch occupies residues 9-40 (PEPEDSVLFRRGTGESDDSDVWDDTALIKAYD). Thr-21 is subject to Phosphothreonine. Phosphoserine occurs at positions 24 and 27. Residue Lys-47 forms a Glycyl lysine isopeptide (Lys-Gly) (interchain with G-Cter in SUMO2) linkage. Disordered stretches follow at residues 51-86 (KNGD…PSKQ) and 149-221 (NAQE…PPPH). The span at 64-77 (GTPKRKSAKNKSQR) shows a compositional bias: basic residues. Thr-65 is subject to Phosphothreonine. Residue Thr-80 is modified to Phosphothreonine; by PKA. A Tudor domain is found at 86–146 (QWKVGDNCCA…LSPTSEVANI (61 aa)). The required for interaction with RPP20/POP7 stretch occupies residues 92-204 (NCCAIWSEDG…MPRSGLGPGK (113 aa)). Low complexity predominate over residues 149-160 (NAQENENESQIS). Residues 167 to 179 (SSRSPLNKPNNIR) are compositionally biased toward polar residues. Residue Lys-204 forms a Glycyl lysine isopeptide (Lys-Gly) (interchain with G-Cter in SUMO2) linkage. Residues 211–221 (GPPPPPPPPPH) are compositionally biased toward pro residues. Residues 234–261 (PPMIPPPPPICPDSLDDADALGSMLISW) are P2 (binding site for SM B). Residues 273–287 (GFKQSQKEGRYSHFN) are required for interaction with SYNCRIP.

The protein belongs to the SMN family. Homooligomer; may form higher order homooligomers in the dimer to octamer range. Part of the core SMN complex that contains SMN1, GEMIN2/SIP1, DDX20/GEMIN3, GEMIN4, GEMIN5, GEMIN6, GEMIN7, GEMIN8 and STRAP/UNRIP. Part of the SMN-Sm complex that contains SMN1, GEMIN2/SIP1, DDX20/GEMIN3, GEMIN4, GEMIN5, GEMIN6, GEMIN7, GEMIN8, STRAP/UNRIP and the Sm proteins SNRPB, SNRPD1, SNRPD2, SNRPD3, SNRPE, SNRPF and SNRPG. Component of an import snRNP complex composed of KPNB1, RNUT1, SMN1 and ZNF259. Interacts with DDX20, FBL, NOLA1, RNUT1, SYNCRIP and with several spliceosomal snRNP core Sm proteins, including SNRPB, SNRPD1, SNRPD2, SNRPD3, SNRPE and ILF3. Interacts with GEMIN2; the interaction is direct. Interacts with GEMIN3; the interaction is direct. Interacts with GEMIN8; the interaction is direct. Interacts with SNRPB; the interaction is direct. Interacts (via Tudor domain) with SNRPD1 (via C-terminus); the interaction is direct. Interacts with SNRPD2; the interaction is direct. Interacts (via Tudor domain) with SNRPD3 (via C-terminus); the interaction is direct. Interacts with SNRPE; the interaction is direct. Interacts with OSTF1, LSM10, LSM11 and RPP20/POP7. Interacts (via C-terminal region) with ZPR1 (via C-terminal region). Interacts (via Tudor domain) with COIL. Interacts with SETX; recruits SETX to POLR2A. Interacts with POLR2A (via the C-terminal domain (CTD)). Interacts with PRMT5. Interacts with XRN2. Interacts (via C-terminus) with FMR1 (via C-terminus); the interaction is direct and occurs in a RNA-independent manner. Interacts (via Tudor domain) with SF3B2 ('Arg-508'-methylated form). Interacts with WRAP53/TCAB1. Interacts (via Tudor domain) with ELAVL4 in an RNA-independent manner; the interaction is required for localization of ELAVL4 to RNA granules. Interacts with FRG1.

It is found in the nucleus. It localises to the gem. The protein localises to the cajal body. The protein resides in the cytoplasm. Its subcellular location is the cytoplasmic granule. It is found in the perikaryon. It localises to the cell projection. The protein localises to the neuron projection. The protein resides in the axon. Its subcellular location is the myofibril. It is found in the sarcomere. It localises to the z line. In terms of biological role, the SMN complex catalyzes the assembly of small nuclear ribonucleoproteins (snRNPs), the building blocks of the spliceosome, and thereby plays an important role in the splicing of cellular pre-mRNAs. Most spliceosomal snRNPs contain a common set of Sm proteins SNRPB, SNRPD1, SNRPD2, SNRPD3, SNRPE, SNRPF and SNRPG that assemble in a heptameric protein ring on the Sm site of the small nuclear RNA to form the core snRNP (Sm core). In the cytosol, the Sm proteins SNRPD1, SNRPD2, SNRPE, SNRPF and SNRPG are trapped in an inactive 6S pICln-Sm complex by the chaperone CLNS1A that controls the assembly of the core snRNP. To assemble core snRNPs, the SMN complex accepts the trapped 5Sm proteins from CLNS1A forming an intermediate. Binding of snRNA inside 5Sm ultimately triggers eviction of the SMN complex, thereby allowing binding of SNRPD3 and SNRPB to complete assembly of the core snRNP. Within the SMN complex, SMN1 acts as a structural backbone and together with GEMIN2 it gathers the Sm complex subunits. Ensures the correct splicing of U12 intron-containing genes that may be important for normal motor and proprioceptive neurons development. Also required for resolving RNA-DNA hybrids created by RNA polymerase II, that form R-loop in transcription terminal regions, an important step in proper transcription termination. May also play a role in the metabolism of small nucleolar ribonucleoprotein (snoRNPs). This is Survival motor neuron protein (SMN1) from Bos taurus (Bovine).